Reading from the N-terminus, the 95-residue chain is Pyrimidine/purine nucleoside phosphorylase (95 aa).

The protein belongs to the nucleoside phosphorylase PpnP family.

The enzyme catalyses a purine D-ribonucleoside + phosphate = a purine nucleobase + alpha-D-ribose 1-phosphate. It carries out the reaction adenosine + phosphate = alpha-D-ribose 1-phosphate + adenine. The catalysed reaction is cytidine + phosphate = cytosine + alpha-D-ribose 1-phosphate. It catalyses the reaction guanosine + phosphate = alpha-D-ribose 1-phosphate + guanine. The enzyme catalyses inosine + phosphate = alpha-D-ribose 1-phosphate + hypoxanthine. It carries out the reaction thymidine + phosphate = 2-deoxy-alpha-D-ribose 1-phosphate + thymine. The catalysed reaction is uridine + phosphate = alpha-D-ribose 1-phosphate + uracil. It catalyses the reaction xanthosine + phosphate = alpha-D-ribose 1-phosphate + xanthine. Its function is as follows. Catalyzes the phosphorolysis of diverse nucleosides, yielding D-ribose 1-phosphate and the respective free bases. Can use uridine, adenosine, guanosine, cytidine, thymidine, inosine and xanthosine as substrates. Also catalyzes the reverse reactions. The polypeptide is Pyrimidine/purine nucleoside phosphorylase (Vibrio cholerae serotype O1 (strain ATCC 39315 / El Tor Inaba N16961)).